The sequence spans 736 residues: Sulfate transporter (736 aa).

The tract at residues 1–28 is disordered; sequence MSSESKEPHVLSPKDSFEGNDRYSPPSR. A phosphoserine mark is found at Ser-12 and Ser-16. 2 helical membrane passes run 114–134 and 139–159; these read VMSG…YSLL and PIYG…LGTS. Asn-201 and Asn-207 each carry an N-linked (GlcNAc...) asparagine glycan. Helical transmembrane passes span 229–249, 257–277, 380–400, 422–442, 457–477, and 526–546; these read FLAG…VSVY, GFVT…LLGL, LIPS…AITV, AIGF…SAAL, LSGV…APLF, and LIST…CVIL. Residues 570 to 721 enclose the STAS domain; it reads AYKNLQARPG…YSVYEAMAFA (152 aa).

The protein belongs to the SLC26A/SulP transporter (TC 2.A.53) family. Post-translationally, N-glycosylated.

The protein resides in the cell membrane. Its subcellular location is the apical cell membrane. The enzyme catalyses oxalate(in) + sulfate(out) = oxalate(out) + sulfate(in). The catalysed reaction is sulfate(out) + 2 chloride(in) = sulfate(in) + 2 chloride(out). It catalyses the reaction oxalate(out) + 2 chloride(in) = oxalate(in) + 2 chloride(out). It carries out the reaction bromide(in) + chloride(out) = bromide(out) + chloride(in). The enzyme catalyses nitrate(in) + chloride(out) = nitrate(out) + chloride(in). The catalysed reaction is iodide(in) + chloride(out) = iodide(out) + chloride(in). Its function is as follows. Sulfate transporter which mediates sulfate uptake into chondrocytes in order to maintain adequate sulfation of proteoglycans which is needed for cartilage development. Mediates electroneutral anion exchange of sulfate ions for oxalate ions, sulfate and oxalate ions for chloride and/or hydroxyl ions and chloride ions for bromide, iodide and nitrate ions. The coupling of sulfate transport to both hydroxyl and chloride ions likely serves to ensure transport at both acidic pH when most sulfate uptake is mediated by sulfate-hydroxide exchange and alkaline pH when most sulfate uptake is mediated by sulfate-chloride exchange. Essential for chondrocyte proliferation, differentiation and cell size expansion. In Equus caballus (Horse), this protein is Sulfate transporter (SLC26A2).